A 1042-amino-acid chain; its full sequence is MFKKVENKANFPKIEEKILKFWNDNKIFEKSMEQREGCEEFTFYDGPPFATGLPHFGHFVPNTIKDIIPRYQTMKGKYVKRNFGWDTHGLPVEYEVEKKLGISGKYEIENYGIENFNKECKKIVLRYTEEWKNIILRLGRWVDFEKGYKTMDISFMESVWWVFKNLYNKGLIYESYYVLPYSPKLATPLSNFEVNLGEYKEVNDPSLTIKFKIKDKNEYLLAWTTTPWTLPSNLGIAVGKEIEYSKIFDKKKEEILILGSKKINSYFDDENAYTIIEKFKGSQLQGIEYEPIFNYFLEQKDKGAFKVHTADYITTDDGTGIVHIAPFGEEDYRVLKKHTNVDIIDPLDAECKFTNRVKDFKGLFVKDADKKIIENLKLRNFLFKRENYLHRYPFCYRTNYPIIYRPISSWFVNVEKIKTQLLEVNEKINWMPAHLKKGRFGKWLENAKDWAISRNRFWGNPIPIWICSKTGKKICVGSRKELEELSGQKIEDLHKDKIDKITWPSKDGGTFIRTSEVLDCWFESGAMPYASNHYPFANESNFKNIFPADFIAEGLDQTRGWFYTLTILGTSLFENTAFKNVIVNGLVLSSDGRKMSKSFKNYTDPMEVINTFGADALRLYLIMSPVVKADDLKYSDNGVRDVLKNIIIPIWNAYSFFTTYAIIDKFKPTKNLSLVKSNNLDKWIISELESLKKILNKEIDKYNLTKSIESLLEFIDKLNNWYIRRSRRRFWKSENDKDKNDAYETLYYAIKTLMILLAPFIPFITEEIYQNLKTDEDKQSIHLNDYPKANENFIDKTIEEKINLARKITSMARSLRSLHNIKIRMPISTIYVVTKNQNEQNMLIEMQEIILDEINVKEMKIKSNEEELITYKAKANFKELGKKLGKDMKTVSIEISKLKNEDIIKIINGISHEIKVDNAKYYLSLNDIILERDEKDNLKVINEESITIGIDSLITQELYLEGLTREFVRQIQNLRKEKNFDVSDRINLYIENNATLEEILNKFEKYIKTETLALNIILNKSKLEKKINLDNDIFTIIGIEKC.

The short motif at 48–58 (PFATGLPHFGH) is the 'HIGH' region element. Positions 594–598 (KMSKS) match the 'KMSKS' region motif. ATP is bound at residue K597.

This sequence belongs to the class-I aminoacyl-tRNA synthetase family. IleS type 2 subfamily. Monomer. Zn(2+) is required as a cofactor.

The protein localises to the cytoplasm. It catalyses the reaction tRNA(Ile) + L-isoleucine + ATP = L-isoleucyl-tRNA(Ile) + AMP + diphosphate. Functionally, catalyzes the attachment of isoleucine to tRNA(Ile). As IleRS can inadvertently accommodate and process structurally similar amino acids such as valine, to avoid such errors it has two additional distinct tRNA(Ile)-dependent editing activities. One activity is designated as 'pretransfer' editing and involves the hydrolysis of activated Val-AMP. The other activity is designated 'posttransfer' editing and involves deacylation of mischarged Val-tRNA(Ile). This chain is Isoleucine--tRNA ligase, found in Borrelia garinii subsp. bavariensis (strain ATCC BAA-2496 / DSM 23469 / PBi) (Borreliella bavariensis).